The following is an 827-amino-acid chain: Probable beta-glucosidase H (827 aa).

The active site involves D223. The PA14 domain maps to 387 to 546 (RLLTNAVMHF…DSAEMVRSAV (160 aa)). N-linked (GlcNAc...) asparagine glycans are attached at residues N471, N594, N600, and N625.

This sequence belongs to the glycosyl hydrolase 3 family.

It is found in the secreted. The catalysed reaction is Hydrolysis of terminal, non-reducing beta-D-glucosyl residues with release of beta-D-glucose.. It functions in the pathway glycan metabolism; cellulose degradation. Functionally, beta-glucosidases are one of a number of cellulolytic enzymes involved in the degradation of cellulosic biomass. Catalyzes the last step releasing glucose from the inhibitory cellobiose. This is Probable beta-glucosidase H (bglH) from Aspergillus flavus (strain ATCC 200026 / FGSC A1120 / IAM 13836 / NRRL 3357 / JCM 12722 / SRRC 167).